Here is an 800-residue protein sequence, read N- to C-terminus: DNA topoisomerase 4 subunit A (800 aa).

The Topo IIA-type catalytic domain occupies 31-495 (LPDVRDGLKP…EIEEIKIDKE (465 aa)). Y119 serves as the catalytic O-(5'-phospho-DNA)-tyrosine intermediate.

The protein belongs to the type II topoisomerase GyrA/ParC subunit family. ParC type 2 subfamily. Heterotetramer composed of ParC and ParE.

It is found in the cell membrane. It carries out the reaction ATP-dependent breakage, passage and rejoining of double-stranded DNA.. In terms of biological role, topoisomerase IV is essential for chromosome segregation. It relaxes supercoiled DNA. Performs the decatenation events required during the replication of a circular DNA molecule. The sequence is that of DNA topoisomerase 4 subunit A from Staphylococcus aureus (strain NCTC 8325 / PS 47).